A 143-amino-acid chain; its full sequence is Peptide methionine sulfoxide reductase MsrB (143 aa).

The MsrB domain occupies 5–126 (KEEKIKSLNR…NSAALRFVPK (122 aa)). The active-site Nucleophile is cysteine 115.

The protein belongs to the MsrB Met sulfoxide reductase family.

The catalysed reaction is L-methionyl-[protein] + [thioredoxin]-disulfide + H2O = L-methionyl-(R)-S-oxide-[protein] + [thioredoxin]-dithiol. This Bacillus subtilis (strain 168) protein is Peptide methionine sulfoxide reductase MsrB.